An 83-amino-acid chain; its full sequence is Weak neurotoxin WNTX33 (83 aa).

The first 21 residues, 1-21, serve as a signal peptide directing secretion; it reads MKTLLLTLVVVTIVCLDLGYS. 4 disulfides stabilise this stretch: C24–C45, C38–C62, C64–C75, and C76–C81.

It belongs to the three-finger toxin family. Short-chain subfamily. Expressed by the venom gland.

Its subcellular location is the secreted. The chain is Weak neurotoxin WNTX33 from Ophiophagus hannah (King cobra).